Reading from the N-terminus, the 414-residue chain is Bifunctional protein GlmU (414 aa).

The interval 1–208 is pyrophosphorylase; the sequence is MDAVILCAGS…SSKLYGIELN (208 aa). UTP contacts are provided by residues 6–9, Gln-74, and Gly-79; that span reads LCAG. N-acetyl-alpha-D-glucosamine 1-phosphate-binding residues include Thr-80, Gly-130, Asn-142, and Asn-162. Residues 209–228 form a linker region; that stretch reads GYWNDIGRPWDVLSANNYFL. Residues 229 to 414 form an N-acetyltransferase region; sequence KNIMPKISGN…KDELIIKKRN (186 aa). The active-site Proton acceptor is the His-312. Acetyl-CoA is bound by residues Ala-388 and Lys-405.

The protein in the N-terminal section; belongs to the N-acetylglucosamine-1-phosphate uridyltransferase family. It in the C-terminal section; belongs to the transferase hexapeptide repeat family.

It catalyses the reaction N-acetyl-alpha-D-glucosamine 1-phosphate + UTP + H(+) = UDP-N-acetyl-alpha-D-glucosamine + diphosphate. The enzyme catalyses alpha-D-glucosamine 1-phosphate + acetyl-CoA = N-acetyl-alpha-D-glucosamine 1-phosphate + CoA + H(+). Its pathway is nucleotide-sugar biosynthesis; UDP-N-acetyl-alpha-D-glucosamine biosynthesis; N-acetyl-alpha-D-glucosamine 1-phosphate from alpha-D-glucosamine 6-phosphate (route II): step 2/2. It functions in the pathway nucleotide-sugar biosynthesis; UDP-N-acetyl-alpha-D-glucosamine biosynthesis; UDP-N-acetyl-alpha-D-glucosamine from N-acetyl-alpha-D-glucosamine 1-phosphate: step 1/1. In terms of biological role, catalyzes the last two sequential reactions in the de novo biosynthetic pathway for UDP-N-acetyl-glucosamine (UDP-GlcNAc). Responsible for the acetylation of GlcN-1-P to GlcNAc-1-P, and for the uridyl transfer from UTP to GlcNAc-1-P, to produce UDP-GlcNAc and pyrophosphate. The chain is Bifunctional protein GlmU from Methanococcus vannielii (strain ATCC 35089 / DSM 1224 / JCM 13029 / OCM 148 / SB).